Here is a 402-residue protein sequence, read N- to C-terminus: Bone morphogenetic protein 8A (402 aa).

A signal peptide spans 1–19; it reads MAARPGPLWLLGLTLCALG. The propeptide occupies 20 to 263; that stretch reads GGGPGLRPPP…ASPSPIRTPR (244 aa). N-linked (GlcNAc...) asparagine glycosylation is found at asparagine 158 and asparagine 343. Disulfide bonds link cysteine 301-cysteine 367, cysteine 330-cysteine 399, and cysteine 334-cysteine 401.

This sequence belongs to the TGF-beta family. In terms of assembly, homodimer; disulfide-linked.

It localises to the secreted. Induces cartilage and bone formation. May be the osteoinductive factor responsible for the phenomenon of epithelial osteogenesis. Plays a role in calcium regulation and bone homeostasis. Signaling protein involved in regulation of thermogenesis and energy balance. Proposed to increase the peripheral response of brown adipose tissue (BAT) to adrenergic stimulation while acting centrally in the hypothalamus to increase sympathetic output to BAT. Its function is as follows. Growth factor of the TGF-beta superfamily that plays important role in various biological processes, including spermatogenesis, osteogenesis, steroidogenesis as well as regulation of energy balance. Initiates the canonical BMP signaling cascade by associating with type I receptor BMPR1A and type II receptor BMPR2. Once all three components are bound together in a complex at the cell surface, BMPR2 phosphorylates and activates BMPR1A. In turn, BMPR1A propagates signal by phosphorylating SMAD1/5/8 that travel to the nucleus and act as activators and repressors of transcription of target genes. In addition, activates the SMAD2/3 pathway. The protein is Bone morphogenetic protein 8A (BMP8A) of Homo sapiens (Human).